The following is a 350-amino-acid chain: DNA repair protein rhp55 (350 aa).

51–58 (GAPGMGKT) contributes to the ATP binding site. Residues 331–350 (QSIPTNSSQRRKRSILECES) form a disordered region.

Belongs to the RecA family. RAD55 subfamily.

The protein resides in the nucleus. In terms of biological role, required for radiation resistance and meiotic viability and acts in recombination and recombinational DNA repair pathways. The polypeptide is DNA repair protein rhp55 (rhp55) (Schizosaccharomyces pombe (strain 972 / ATCC 24843) (Fission yeast)).